Consider the following 518-residue polypeptide: MSKRALISVSDKEGIVEFAKKIQELGWEIISTGGTKAVLDQEEIPNIAIDEVTGFPEMMDGRVKTLHPLIHGALLGRRDLDSHMKSLAEHHISPIDLVVVNLYPFKETLLAGGSQAEMIEKIDIGGPSMLRSAAKNHAAVTVVCDPMDYEKVEKELSADGETSLELRQQLAAKVFRHTASYDALIAQYLTEEFPVEDTKPEKLTLTYDLKQGMRYGENPQQSADFYESGLPTTYSIAQSHQLHGKELSYNNVRDADAALQIARDFDEPTVVALKHMNPCGIGTAKNIEQAWDYAYEADPVSIFGGIIVLNREVTEETAQKMSKIFLEIIIAPSYSKEALEILSKKKNIRLLTVDFSKKEQSEKEALVTGVLGGLLVQNQDVIVENPKEWTVATKVQPTDRQMEAMKFAWKAVKFVKSNGIIVTNDHQTLGVGPGQTNRVGSVKIALEATADKDALLQENAVLGSDAFFPFADNIDEIAKAGIKAIVQPGGSVRDQEVIEACDKYGIAMVFTGLRHFRH.

The 144-residue stretch at 1–144 (MSKRALISVS…KNHAAVTVVC (144 aa)) folds into the MGS-like domain.

Belongs to the PurH family.

The catalysed reaction is (6R)-10-formyltetrahydrofolate + 5-amino-1-(5-phospho-beta-D-ribosyl)imidazole-4-carboxamide = 5-formamido-1-(5-phospho-D-ribosyl)imidazole-4-carboxamide + (6S)-5,6,7,8-tetrahydrofolate. It carries out the reaction IMP + H2O = 5-formamido-1-(5-phospho-D-ribosyl)imidazole-4-carboxamide. Its pathway is purine metabolism; IMP biosynthesis via de novo pathway; 5-formamido-1-(5-phospho-D-ribosyl)imidazole-4-carboxamide from 5-amino-1-(5-phospho-D-ribosyl)imidazole-4-carboxamide (10-formyl THF route): step 1/1. It participates in purine metabolism; IMP biosynthesis via de novo pathway; IMP from 5-formamido-1-(5-phospho-D-ribosyl)imidazole-4-carboxamide: step 1/1. In Lactococcus lactis subsp. cremoris (strain SK11), this protein is Bifunctional purine biosynthesis protein PurH.